Here is a 1043-residue protein sequence, read N- to C-terminus: Chitin synthase 2 (1043 aa).

Over residues 1–10 (MAQESSNMDQ) the composition is skewed to polar residues. 2 disordered regions span residues 1-133 (MAQE…PRRP) and 215-234 (ESDFNVHYGPAPTGRQERRG). A compositionally biased stretch (basic and acidic residues) spans 11–21 (SKSDNVTDNKP). Over residues 43-58 (SASTSSLPTSRPSSSP) the composition is skewed to low complexity. Polar residues-rich tracts occupy residues 59-73 (GQSPNITPSILTSDT) and 81-93 (VSPTRPWTPSRGS). A run of 6 helical transmembrane segments spans residues 663 to 683 (FVSLAFTFFSLANFYLTFYFI), 703 to 723 (IFAILRYTCVLLICLQFVLSM), 738 to 758 (MIIYCIIMMYTVFSALYMVVM), 780 to 800 (YIIVSTLSTVGLYFFMSFLYL), 907 to 927 (YMVSVWFIANAILAMAVSEAF), and 931 to 951 (SVGNNAYLAFVLWSVASLAVF).

The protein belongs to the chitin synthase family. Class II subfamily.

The protein localises to the cell membrane. The enzyme catalyses [(1-&gt;4)-N-acetyl-beta-D-glucosaminyl](n) + UDP-N-acetyl-alpha-D-glucosamine = [(1-&gt;4)-N-acetyl-beta-D-glucosaminyl](n+1) + UDP + H(+). Polymerizes chitin, a structural polymer of the cell wall and septum, by transferring the sugar moiety of UDP-GlcNAc to the non-reducing end of the growing chitin polymer. In Paracoccidioides brasiliensis, this protein is Chitin synthase 2 (CHS2).